We begin with the raw amino-acid sequence, 130 residues long: Secreted RxLR effector protein 66 (130 aa).

An N-terminal signal peptide occupies residues 1–21; that stretch reads MHLRLLMSTVITATLIVSNNA. The short motif at 32-62 is the RxLR-dEER element; the sequence is RALRGASTVGIAADNLLAAHFSPTLKHKESR. A helical membrane pass occupies residues 104 to 124; it reads GPAIAIFAGVAATFILIDYLI.

The protein belongs to the RxLR effector family.

The protein localises to the secreted. Its subcellular location is the host cytoplasm. The protein resides in the host nucleus. It localises to the membrane. In terms of biological role, effector that acts as a broad suppressor of cell death to interrupt plant immunity. Inhibits cell death induced by cell death-inducing proteins, including the PAMP elicitor INF1 from P.infestans. The protein is Secreted RxLR effector protein 66 of Plasmopara viticola (Downy mildew of grapevine).